The primary structure comprises 328 residues: MRSFILACADRVVEGATLGAEEALRLAEARGADLHLLFAEASRIRQHFTGNSASLCSIINAKSGRCAENCAFCAQSAAHKTDAQVYPLVDEEEIVRCARDAERNGARCYGIVTSGTGIRPGAELETICNSLRRIRSETAIAPSCSLGILDEETARLLKDAGMVTYHHNLETSRSFFPSICSSHDYEQDVETIRAVKRAGVRVCCGGIFGLGESFGQRIEMTETLRELDVDSVPLNFLNPVEGTRLEKADFLTPLECLKTIAIYRFMLPGKSLSVCGGRETNLRELQSWIFLAGASGMMTGNYLTTLGRKPEQDHQMLADLGMGVGGCS.

In terms of domain architecture, Radical SAM core spans 48–278 (FTGNSASLCS…GKSLSVCGGR (231 aa)). The [4Fe-4S] cluster site is built by C66, C70, and C73. S143 and C203 together coordinate [2Fe-2S] cluster.

It belongs to the radical SAM superfamily. Biotin synthase family. Homodimer. [4Fe-4S] cluster is required as a cofactor. Requires [2Fe-2S] cluster as cofactor.

The catalysed reaction is (4R,5S)-dethiobiotin + (sulfur carrier)-SH + 2 reduced [2Fe-2S]-[ferredoxin] + 2 S-adenosyl-L-methionine = (sulfur carrier)-H + biotin + 2 5'-deoxyadenosine + 2 L-methionine + 2 oxidized [2Fe-2S]-[ferredoxin]. The protein operates within cofactor biosynthesis; biotin biosynthesis; biotin from 7,8-diaminononanoate: step 2/2. In terms of biological role, catalyzes the conversion of dethiobiotin (DTB) to biotin by the insertion of a sulfur atom into dethiobiotin via a radical-based mechanism. The protein is Biotin synthase of Pelobacter propionicus (strain DSM 2379 / NBRC 103807 / OttBd1).